The following is a 381-amino-acid chain: uncharacterized protein (381 aa).

9 helical membrane-spanning segments follow: residues 59 to 79 (LITL…LYYM), 84 to 104 (GVAP…YQTM), 147 to 167 (VGVN…FFMA), 190 to 210 (SMMA…FNTI), 222 to 242 (LVLL…TFSI), 250 to 270 (ILTN…SIYW), 284 to 304 (HYFM…LILA), 311 to 331 (LSPI…IYKF), and 344 to 364 (VYFF…VTSL).

It belongs to the CDP-alcohol phosphatidyltransferase class-I family.

The protein resides in the membrane. This is an uncharacterized protein from Dictyostelium discoideum (Social amoeba).